The following is a 133-amino-acid chain: Minor spike protein H (133 aa).

It belongs to the microviridae H protein family.

It is found in the virion. Its function is as follows. Probably triggers with protein G the injection of the phage DNA into the host upon conformational changes induced by virus-host receptor interaction. The sequence is that of Minor spike protein H from Spiroplasma virus 4 (SpV4).